A 702-amino-acid polypeptide reads, in one-letter code: Polyribonucleotide nucleotidyltransferase (702 aa).

Mg(2+) is bound by residues Asp-486 and Asp-492. The KH domain occupies 553-612; sequence PSMATIKIDPEKIRDVIGKGGATIRSITEQTGASIDLDDDGTVRIYAADKASSDAALLKI. An S1 motif domain is found at 622 to 690; that stretch reads DKLYKGKVVR…ARGRIKLSMK (69 aa).

This sequence belongs to the polyribonucleotide nucleotidyltransferase family. In terms of assembly, component of the RNA degradosome, which is a multiprotein complex involved in RNA processing and mRNA degradation. Requires Mg(2+) as cofactor.

The protein localises to the cytoplasm. It carries out the reaction RNA(n+1) + phosphate = RNA(n) + a ribonucleoside 5'-diphosphate. In terms of biological role, involved in mRNA degradation. Catalyzes the phosphorolysis of single-stranded polyribonucleotides processively in the 3'- to 5'-direction. The sequence is that of Polyribonucleotide nucleotidyltransferase from Marinomonas sp. (strain MWYL1).